Consider the following 875-residue polypeptide: Alanine--tRNA ligase (875 aa).

His564, His568, Cys666, and His670 together coordinate Zn(2+).

It belongs to the class-II aminoacyl-tRNA synthetase family. As to quaternary structure, homotetramer. It depends on Zn(2+) as a cofactor.

It is found in the cytoplasm. The enzyme catalyses tRNA(Ala) + L-alanine + ATP = L-alanyl-tRNA(Ala) + AMP + diphosphate. Catalyzes the attachment of alanine to tRNA(Ala) in a two-step reaction: alanine is first activated by ATP to form Ala-AMP and then transferred to the acceptor end of tRNA(Ala). Also edits incorrectly charged Ser-tRNA(Ala) and Gly-tRNA(Ala) via its editing domain. The protein is Alanine--tRNA ligase of Yersinia pseudotuberculosis serotype IB (strain PB1/+).